A 167-amino-acid polypeptide reads, in one-letter code: Dihydrofolate reductase (167 aa).

Residues 1-162 form the DHFR domain; that stretch reads MFISMWAQDK…YPHRFQKWQK (162 aa). Residues A7 and 13-19 each bind NADP(+); that span reads LIGKDGL. Position 27 (D27) interacts with substrate. 45 to 46 lines the NADP(+) pocket; the sequence is KT. R58 contributes to the substrate binding site. Residues 64-65 and 99-106 contribute to the NADP(+) site; these read TT and GGSRIFQA. T117 serves as a coordination point for substrate.

Belongs to the dihydrofolate reductase family.

It catalyses the reaction (6S)-5,6,7,8-tetrahydrofolate + NADP(+) = 7,8-dihydrofolate + NADPH + H(+). Its pathway is cofactor biosynthesis; tetrahydrofolate biosynthesis; 5,6,7,8-tetrahydrofolate from 7,8-dihydrofolate: step 1/1. Key enzyme in folate metabolism. Catalyzes an essential reaction for de novo glycine and purine synthesis, and for DNA precursor synthesis. The protein is Dihydrofolate reductase (folA) of Enterococcus faecium (Streptococcus faecium).